A 120-amino-acid chain; its full sequence is NAD(P)H-quinone oxidoreductase subunit 3, chloroplastic (120 aa).

A run of 3 helical transmembrane segments spans residues 9–29, 62–82, and 88–108; these read IFWA…FLSG, YYMF…LYPW, and VLGV…IVGL.

The protein belongs to the complex I subunit 3 family. As to quaternary structure, NDH is composed of at least 16 different subunits, 5 of which are encoded in the nucleus.

Its subcellular location is the plastid. It localises to the chloroplast thylakoid membrane. It catalyses the reaction a plastoquinone + NADH + (n+1) H(+)(in) = a plastoquinol + NAD(+) + n H(+)(out). The enzyme catalyses a plastoquinone + NADPH + (n+1) H(+)(in) = a plastoquinol + NADP(+) + n H(+)(out). Its function is as follows. NDH shuttles electrons from NAD(P)H:plastoquinone, via FMN and iron-sulfur (Fe-S) centers, to quinones in the photosynthetic chain and possibly in a chloroplast respiratory chain. The immediate electron acceptor for the enzyme in this species is believed to be plastoquinone. Couples the redox reaction to proton translocation, and thus conserves the redox energy in a proton gradient. The protein is NAD(P)H-quinone oxidoreductase subunit 3, chloroplastic of Trachelium caeruleum (Blue throatwort).